Here is a 514-residue protein sequence, read N- to C-terminus: ATP synthase subunit alpha (514 aa).

170 to 177 is an ATP binding site; the sequence is GDRQTGKT.

The protein belongs to the ATPase alpha/beta chains family. In terms of assembly, F-type ATPases have 2 components, CF(1) - the catalytic core - and CF(0) - the membrane proton channel. CF(1) has five subunits: alpha(3), beta(3), gamma(1), delta(1), epsilon(1). CF(0) has three main subunits: a(1), b(2) and c(9-12). The alpha and beta chains form an alternating ring which encloses part of the gamma chain. CF(1) is attached to CF(0) by a central stalk formed by the gamma and epsilon chains, while a peripheral stalk is formed by the delta and b chains.

It localises to the cell inner membrane. It catalyses the reaction ATP + H2O + 4 H(+)(in) = ADP + phosphate + 5 H(+)(out). Its function is as follows. Produces ATP from ADP in the presence of a proton gradient across the membrane. The alpha chain is a regulatory subunit. This chain is ATP synthase subunit alpha, found in Psychrobacter arcticus (strain DSM 17307 / VKM B-2377 / 273-4).